A 696-amino-acid polypeptide reads, in one-letter code: HIPL2 protein (696 aa).

Positions 1-24 are cleaved as a signal peptide; it reads MAKTNQAITICSLLLLLLLSETTS. Residues Asn38, Asn69, Asn74, Asn108, Asn124, Asn148, Asn175, Asn339, Asn431, Asn513, Asn519, Asn528, Asn581, and Asn651 are each glycosylated (N-linked (GlcNAc...) asparagine). Ser672 is lipidated: GPI-anchor amidated serine. Positions 673-696 are cleaved as a propeptide — removed in mature form; that stretch reads SARKLCFSVFLLLSLLMMFLTLLD.

The protein belongs to the PQQ oxidoreductase GdhB family. Pyrroloquinoline quinone serves as cofactor.

The protein resides in the cell membrane. This chain is HIPL2 protein (HIPL2), found in Arabidopsis thaliana (Mouse-ear cress).